Consider the following 214-residue polypeptide: Outer-membrane lipoprotein LolB (214 aa).

An N-terminal signal peptide occupies residues 1–25 (MNNLKRFTKSIFSCIALSGLLFLGG). Cys26 is lipidated: N-palmitoyl cysteine. Cys26 carries the S-diacylglycerol cysteine lipid modification.

It belongs to the LolB family. In terms of assembly, monomer.

The protein resides in the cell outer membrane. In terms of biological role, plays a critical role in the incorporation of lipoproteins in the outer membrane after they are released by the LolA protein. This is Outer-membrane lipoprotein LolB from Shewanella sp. (strain MR-4).